A 294-amino-acid polypeptide reads, in one-letter code: Mitochondrial glycine transporter (294 aa).

Solcar repeat units lie at residues 5–84 (RRAT…IRQA), 102–186 (LNMY…MKVL), and 208–292 (ASTL…IVKK). The next 6 helical transmembrane spans lie at 11–36 (LIGG…TRLQ), 59–85 (GALP…RQAI), 108–133 (MFSG…VRYE), 161–184 (GFGA…DRMK), 212–238 (INGS…KTRM), and 267–285 (GISL…AWGI).

This sequence belongs to the mitochondrial carrier (TC 2.A.29) family. SLC25A38 subfamily.

The protein resides in the mitochondrion inner membrane. It carries out the reaction glycine(in) = glycine(out). Mitochondrial glycine transporter that imports glycine into the mitochondrial matrix. Plays an important role in providing glycine for the first enzymatic step in heme biosynthesis, the condensation of glycine with succinyl-CoA to produce 5-aminolevulinate (ALA) in the mitochondrial matrix. This chain is Mitochondrial glycine transporter, found in Kluyveromyces lactis (strain ATCC 8585 / CBS 2359 / DSM 70799 / NBRC 1267 / NRRL Y-1140 / WM37) (Yeast).